The sequence spans 283 residues: CASP-like protein 4A3 (283 aa).

The disordered stretch occupies residues 1 to 86 (MRSPAKTMPS…VEETPSPIVV (86 aa)). Topologically, residues 1-135 (MRSPAKTMPS…SRREEVVKFS (135 aa)) are cytoplasmic. Positions 9–20 (PSMSPSSVSTEK) are enriched in low complexity. Positions 50-79 (SLDHSSESEKEDAKSKPESRRNKNPGKVEE) are enriched in basic and acidic residues. Residues 136-156 (ALGFRLSEVVLALISFSIMAA) form a helical membrane-spanning segment. At 157 to 174 (DKTKGWSGDSFDRYKEYR) the chain is on the extracellular side. The helical transmembrane segment at 175 to 195 (FCLSVNVVAFVYSSFQACDLA) threads the bilayer. Residues 196–212 (YHLVKEKHLISHHLRPL) lie on the Cytoplasmic side of the membrane. Residues 213-233 (FEFIIDQVLAYLLMSASTAAV) traverse the membrane as a helical segment. Over 234 to 251 (TRVDDWVSNWGKDEFTEM) the chain is Extracellular. Residues 252–272 (ASASIAMSFLAFLAFAFSSLI) form a helical membrane-spanning segment. The Cytoplasmic portion of the chain corresponds to 273–283 (SGYNLFNQGSL).

This sequence belongs to the Casparian strip membrane proteins (CASP) family. In terms of assembly, homodimer and heterodimers.

It localises to the cell membrane. The protein is CASP-like protein 4A3 of Arabidopsis thaliana (Mouse-ear cress).